The chain runs to 108 residues: MTETKNEIKLHVLFGALAVGFLMLALFSFSLQMLPVADLAKEFGIPGSVAAVVLNVVEAGGAVTTIVSILTAVGSGGLSLIAAAGKETIRQYLKNEIKKKGRKAVIAW.

The propeptide occupies 1-38 (MTETKNEIKLHVLFGALAVGFLMLALFSFSLQMLPVAD). The segment at residues 39 to 108 (LAKEFGIPGS…KKGRKAVIAW (70 aa)) is a cross-link (cyclopeptide (Leu-Trp)).

Post-translationally, the cross-link permits a high resistance to proteolysis. Is more resistant to specific proteases than to unspecific proteases.

The protein localises to the secreted. Its function is as follows. Cyclopeptide antibiotic that inhibits both Gram-positive and Gram-negative bacteria. Shows potent to weak activities against M.flavus (MIC=3 ug/ml), B.cereus (MIC=12 ug/ml), B.pumilus (MIC=12 ug/ml), E.coli (MIC=12 ug/ml), and S.pneumoniae (MIC=47 ug/ml). May act by forming pores. This is Pumilarin from Bacillus safensis.